Here is a 331-residue protein sequence, read N- to C-terminus: POU domain, class 4, transcription factor 3 (331 aa).

Low complexity predominate over residues 81 to 97 (TSSSSTVPISHPSSNLP). The segment at 81 to 108 (TSSSSTVPISHPSSNLPSHHHHHLSHQT) is disordered. One can recognise a POU-specific domain in the interval 172 to 249 (DVESDPRELE…VLQAWLEEAE (78 aa)). The segment at residues 267–326 (RKRKRTSIAAPEKRSLEAYFAIQPRPSSEKIAAIAEKLDLKKNVVRVWFCNQRQKQKRMK) is a DNA-binding region (homeobox).

This sequence belongs to the POU transcription factor family. Class-4 subfamily. In terms of assembly, interaction with ISL1. In terms of tissue distribution, expressed in the nervous system. Expressed in the otic vesicle during embryogenesis. Expressed in the adult retina in a subset of retinal ganglion cells (RGCs), and at a lower level in the adult tectum. Not expressed in the adult olfactory bulb.

The protein localises to the nucleus. Its subcellular location is the cytoplasm. In terms of biological role, acts as a transcriptional activator. Acts by binding to sequences related to the consensus octamer motif 5'-ATGCAAAT-3' in the regulatory regions of its target genes. May play a role in specifying terminally differentiated neuronal phenotypes. This is POU domain, class 4, transcription factor 3 (pou4f3) from Danio rerio (Zebrafish).